Here is a 359-residue protein sequence, read N- to C-terminus: uncharacterized protein (359 aa).

The segment covering 73–88 (AATAGTTPATGASGSA) has biased composition (low complexity). Positions 73–93 (AATAGTTPATGASGSARPTDA) are disordered. The 176-residue stretch at 179–354 (PSTCRGDNVS…AFSAAIQAGE (176 aa)) folds into the Macro domain.

This is an uncharacterized protein from Mycobacterium tuberculosis (strain ATCC 25618 / H37Rv).